The primary structure comprises 303 residues: MESALPSIFTLVIIAEFIIGNLSNGFIVLINCIDWVSKRELSSVDKLLIILAISRIGLIWEILVSWFLALHSLAIFVSGTGLRIMIFSWIVSNHFNLWLATILSIFYLLKIASFSSPAFLYLKRRVNKVILMILLGTLVFLFLNLIQINMLIKDWLDRYERNTTWNFSMSDFETFSVSVRFTMTMFSLTPFTVAFISFLLLVFSLQKHLQKMQLNYKGHRDPRTKVHTNALKIVISFLLLYASFFLSILISWISELYQNTVIYMLCETIGAFYPSSHSFLLILGNAKLRQAFLLVAAKVWAKR.

The Extracellular portion of the chain corresponds to methionine 1–serine 7. The chain crosses the membrane as a helical span at residues isoleucine 8–valine 28. The Cytoplasmic segment spans residues leucine 29 to arginine 55. The helical transmembrane segment at isoleucine 56–phenylalanine 76 threads the bilayer. Over valine 77–methionine 85 the chain is Extracellular. The chain crosses the membrane as a helical span at residues isoleucine 86–phenylalanine 106. Over tyrosine 107–lysine 128 the chain is Cytoplasmic. Residues valine 129 to asparagine 149 traverse the membrane as a helical segment. Topologically, residues methionine 150–threonine 184 are extracellular. N-linked (GlcNAc...) asparagine glycans are attached at residues asparagine 162 and asparagine 166. A helical membrane pass occupies residues methionine 185–leucine 205. At glutamine 206 to lysine 232 the chain is on the cytoplasmic side. The chain crosses the membrane as a helical span at residues isoleucine 233–isoleucine 253. Residues serine 254–valine 261 lie on the Extracellular side of the membrane. Residues isoleucine 262–isoleucine 282 traverse the membrane as a helical segment. Residues leucine 283–arginine 303 are Cytoplasmic-facing.

This sequence belongs to the G-protein coupled receptor T2R family.

The protein resides in the membrane. In terms of biological role, receptor that may play a role in the perception of bitterness and is gustducin-linked. May play a role in sensing the chemical composition of the gastrointestinal content. The activity of this receptor may stimulate alpha gustducin, mediate PLC-beta-2 activation and lead to the gating of TRPM5. The polypeptide is Taste receptor type 2 member 13 (TAS2R13) (Pan troglodytes (Chimpanzee)).